The sequence spans 304 residues: Non-specific ribonucleoside hydrolase RihC (304 aa).

Residue His233 is part of the active site.

The protein belongs to the IUNH family. RihC subfamily.

In terms of biological role, hydrolyzes both purine and pyrimidine ribonucleosides with a broad-substrate specificity. In Escherichia coli O45:K1 (strain S88 / ExPEC), this protein is Non-specific ribonucleoside hydrolase RihC.